Reading from the N-terminus, the 117-residue chain is Envelope glycoprotein J (117 aa).

The first 26 residues, 1 to 26 (MRSLLFVVGAWVAAAVTHLTPNAALA), serve as a signal peptide directing secretion. The interval 26–64 (ATGTTPTVGANSTADPGTGANGTTVPAAGTPANSTTAAE) is disordered. The span at 27 to 40 (TGTTPTVGANSTAD) shows a compositional bias: polar residues. At 27–73 (TGTTPTVGANSTADPGTGANGTTVPAAGTPANSTTAAETPAPFPPVD) the chain is on the extracellular side. N-linked (GlcNAc...) asparagine; by host glycosylation is found at Asn-36, Asn-46, and Asn-58. A helical transmembrane segment spans residues 74-94 (FALPVVIGGLCALTLAAMGAG). Topologically, residues 95–117 (ALLHRCCRRAAARRRQRAAYVYA) are cytoplasmic.

This sequence belongs to the alphaherpesvirinae glycoprotein J family.

It is found in the host Golgi apparatus membrane. It localises to the host endoplasmic reticulum membrane. The protein resides in the host endosome membrane. In terms of biological role, inhibits host cell apoptosis. Induces an increase in reactive oxygen species (ROS) in the host cell. The polypeptide is Envelope glycoprotein J (gJ) (Homo sapiens (Human)).